Reading from the N-terminus, the 2898-residue chain is Pericentrin (2898 aa).

Positions 1 to 117 (MEDEQEQRRR…QPPPPQTAHS (117 aa)) are disordered. Residues 34–44 (SKKKTAKRKGS) are compositionally biased toward basic residues. The residue at position 44 (Ser44) is a Phosphoserine. Coiled-coil stretches lie at residues 127-343 (LNNM…IRLL) and 382-434 (AQQQ…DSLE). Residues 429 to 460 (REDSLESTEISSSCVLPEETSGREGKEPPDPL) are disordered. Positions 448–457 (TSGREGKEPP) are enriched in basic and acidic residues. Coiled coils occupy residues 468 to 527 (KVQE…LREK), 611 to 696 (CALQ…LETH), 727 to 787 (VADV…SLRM), and 872 to 939 (SQDQ…LRRL). Phosphoserine is present on Ser1022. Coiled-coil stretches lie at residues 1069 to 1383 (EREF…QENM), 1429 to 1482 (NEVV…SLMG), and 1529 to 1593 (QLLA…AKEA). Position 1437 is a phosphoserine (Ser1437). Disordered regions lie at residues 1745–1786 (VASR…DDVL), 1815–1880 (TQEK…PLTP), and 1958–1979 (TSPS…GPDI). Polar residues-rich tracts occupy residues 1747–1766 (SRDT…SENG) and 1817–1834 (EKLT…SGHS). The interval 1801–1822 (NQDLLVQVEMPDFPTQEKLTSQ) is interaction with CDK5RAP2. A phosphoserine mark is found at Ser1828, Ser1859, Ser1860, and Ser1959. Residues 1963–1976 (ELARRSDGSRKSDG) are compositionally biased toward basic and acidic residues. A Phosphoserine modification is found at Ser1987. The span at 2046 to 2055 (SESQDPSSAL) shows a compositional bias: polar residues. A disordered region spans residues 2046-2088 (SESQDPSSALNKGEPRDPLDGFPRDSQALSEVTTDKGEKESLE). 2 stretches are compositionally biased toward basic and acidic residues: residues 2058–2068 (GEPRDPLDGFP) and 2078–2088 (TTDKGEKESLE). A Phosphoserine modification is found at Ser2128. 2 coiled-coil regions span residues 2211 to 2403 (KVEQ…EALQ) and 2429 to 2590 (HALL…ELSM). 2 disordered regions span residues 2509 to 2532 (VSGG…QFQE) and 2653 to 2684 (NRQS…QTTS). Residues 2545 to 2810 (LCAAGLLTSF…SQRQRSPSGP (266 aa)) are interaction with NEK2. The span at 2653–2671 (NRQSKSSLKQDGTDLQSSL) shows a compositional bias: polar residues. Residues 2758-2771 (KFRTAVRVVIAVLR) form a calmodulin-binding region. The tract at residues 2787-2898 (ALVHPKSTRH…QKSCHQKIKQ (112 aa)) is disordered. Basic residues predominate over residues 2792–2802 (KSTRHGHRTSQ). Over residues 2845–2860 (TSTPSSRLERSLTASQ) the composition is skewed to polar residues. The span at 2861–2874 (DPEHSLTEYIHHLE) shows a compositional bias: basic and acidic residues. Ser2865 carries the phosphoserine modification.

Interacts with DISC1 and PCM1. Binds calmodulin. Interacts with CEP131. Interacts with CDK5RAP2; the interaction is leading to centrosomal localization of PCNT and CDK5RAP2. Interacts with CHD3. Interacts with CHD4; the interaction regulates centrosome integrity. Interacts with NEK2. Interacts with CCDC13. Interacts with CEP68. Interacts with ATF5; the ATF5:PCNT:polyglutamylated tubulin (PGT) tripartite unites the mother centriole and the pericentriolar material (PCM) in the centrosome. Cleaved during mitotis which leads to removal of CDK5RAP2 from the centrosome and promotes centriole disengagement and subsequent centriole separation. The C-terminal fragment is rapidly degraded following cleavage. In terms of processing, ubiquitinated by TRIM43; leading to proteasomal degradation. As to expression, expressed in heart and lung (at protein level). Expressed in kidney, thymus, liver, brain, muscle, testis, spleen, lung and heart.

It is found in the cytoplasm. It localises to the cytoskeleton. The protein resides in the microtubule organizing center. The protein localises to the centrosome. Functionally, integral component of the filamentous matrix of the centrosome involved in the initial establishment of organized microtubule arrays in both mitosis and meiosis. Plays a role, together with DISC1, in the microtubule network formation. Is an integral component of the pericentriolar material (PCM). May play an important role in preventing premature centrosome splitting during interphase by inhibiting NEK2 kinase activity at the centrosome. The chain is Pericentrin (Pcnt) from Mus musculus (Mouse).